Reading from the N-terminus, the 144-residue chain is Large ribosomal subunit protein uL16 (144 aa).

A compositionally biased stretch (basic residues) spans M1–H16. Residues M1–E20 are disordered.

It belongs to the universal ribosomal protein uL16 family. Part of the 50S ribosomal subunit.

Binds 23S rRNA and is also seen to make contacts with the A and possibly P site tRNAs. In Limosilactobacillus reuteri (strain DSM 20016) (Lactobacillus reuteri), this protein is Large ribosomal subunit protein uL16.